The primary structure comprises 172 residues: Protein GrpE (172 aa).

Over residues 1 to 11 the composition is skewed to low complexity; that stretch reads MSEENNSQNSN. Residues 1 to 22 form a disordered region; it reads MSEENNSQNSNPPNPENGEIAS.

This sequence belongs to the GrpE family. Homodimer.

The protein localises to the cytoplasm. In terms of biological role, participates actively in the response to hyperosmotic and heat shock by preventing the aggregation of stress-denatured proteins, in association with DnaK and GrpE. It is the nucleotide exchange factor for DnaK and may function as a thermosensor. Unfolded proteins bind initially to DnaJ; upon interaction with the DnaJ-bound protein, DnaK hydrolyzes its bound ATP, resulting in the formation of a stable complex. GrpE releases ADP from DnaK; ATP binding to DnaK triggers the release of the substrate protein, thus completing the reaction cycle. Several rounds of ATP-dependent interactions between DnaJ, DnaK and GrpE are required for fully efficient folding. This Bdellovibrio bacteriovorus (strain ATCC 15356 / DSM 50701 / NCIMB 9529 / HD100) protein is Protein GrpE.